We begin with the raw amino-acid sequence, 569 residues long: Proline--tRNA ligase (569 aa).

Belongs to the class-II aminoacyl-tRNA synthetase family. ProS type 1 subfamily. As to quaternary structure, homodimer.

Its subcellular location is the cytoplasm. It catalyses the reaction tRNA(Pro) + L-proline + ATP = L-prolyl-tRNA(Pro) + AMP + diphosphate. In terms of biological role, catalyzes the attachment of proline to tRNA(Pro) in a two-step reaction: proline is first activated by ATP to form Pro-AMP and then transferred to the acceptor end of tRNA(Pro). As ProRS can inadvertently accommodate and process non-cognate amino acids such as alanine and cysteine, to avoid such errors it has two additional distinct editing activities against alanine. One activity is designated as 'pretransfer' editing and involves the tRNA(Pro)-independent hydrolysis of activated Ala-AMP. The other activity is designated 'posttransfer' editing and involves deacylation of mischarged Ala-tRNA(Pro). The misacylated Cys-tRNA(Pro) is not edited by ProRS. The protein is Proline--tRNA ligase of Legionella pneumophila (strain Paris).